A 209-amino-acid polypeptide reads, in one-letter code: Peroxynitrite isomerase 2 (209 aa).

Positions 56 to 62 match the GXWXGXG motif; the sequence is GVWRGEG. Residues Lys172 and His199 each coordinate heme b.

The protein belongs to the nitrobindin family. As to quaternary structure, homodimer. Heme b is required as a cofactor.

The enzyme catalyses peroxynitrite = nitrate. It participates in nitrogen metabolism. Its function is as follows. Heme-binding protein able to scavenge peroxynitrite and to protect free L-tyrosine against peroxynitrite-mediated nitration, by acting as a peroxynitrite isomerase that converts peroxynitrite to nitrate. Therefore, this protein likely plays a role in peroxynitrite sensing and in the detoxification of reactive nitrogen and oxygen species (RNS and ROS, respectively). Is able to bind nitric oxide (NO) in vitro, but may act as a sensor of peroxynitrite levels in vivo. This chain is Peroxynitrite isomerase 2, found in Mycolicibacterium gilvum (strain PYR-GCK) (Mycobacterium gilvum (strain PYR-GCK)).